The primary structure comprises 314 residues: Melanoma-associated antigen 6 (314 aa).

Residues 1–20 (MPLEQRSQHCKPEEGLEARG) are compositionally biased toward basic and acidic residues. The interval 1–99 (MPLEQRSQHC…QEEEGPSTFP (99 aa)) is disordered. The span at 21-44 (EALGLVGAQAPATEEQEAASSSST) shows a compositional bias: low complexity. Polar residues predominate over residues 65-87 (PQGASSLPTTMNYPLWSQSYEDS). One can recognise an MAGE domain in the interval 109–308 (LSRKVAKLVH…ISYPLLHEWA (200 aa)).

In terms of assembly, interacts with TRIM28. Ubiquitinated by the DCX(DCAF12) complex specifically recognizes the diglutamate (Glu-Glu) at the C-terminus, leading to its degradation. As to expression, expressed in many tumors of several types, such as melanoma, head and neck squamous cell carcinoma, lung carcinoma and breast carcinoma, but not in normal tissues except for testes.

In terms of biological role, activator of ubiquitin ligase activity of RING-type zinc finger-containing E3 ubiquitin-protein ligases that acts as a repressor of autophagy. May enhance ubiquitin ligase activity of TRIM28 and stimulate p53/TP53 ubiquitination by TRIM28. Proposed to act through recruitment and/or stabilization of the Ubl-conjugating enzyme (E2) at the E3:substrate complex. May play a role in tumor transformation or aspects of tumor progression. In vitro promotes cell viability in melanoma cell lines. The sequence is that of Melanoma-associated antigen 6 from Homo sapiens (Human).